A 119-amino-acid chain; its full sequence is Immunoglobulin heavy variable 2-5 (119 aa).

The signal sequence occupies residues 1–19; the sequence is MDTLCSTLLLLTIPSWVLS. Glutamine 20 is subject to Pyrrolidone carboxylic acid. Positions 20–44 are framework-1; sequence QITLKESGPTLVKPTQTLTLTCTFS. In terms of domain architecture, Ig-like spans 20-119; the sequence is QITLKESGPT…DTATYYCAHR (100 aa). Cysteine 41 and cysteine 116 are joined by a disulfide. The interval 45–54 is complementarity-determining-1; it reads GFSLSTSGVG. The framework-2 stretch occupies residues 55-71; the sequence is VGWIRQPPGKALEWLAL. Positions 72–78 are complementarity-determining-2; it reads IYWDDDK. Positions 79–116 are framework-3; the sequence is RYSPSLKSRLTITKDTSKNQVVLTMTNMDPVDTATYYC. Positions 117 to 119 are complementarity-determining-3; sequence AHR.

Immunoglobulins are composed of two identical heavy chains and two identical light chains; disulfide-linked.

The protein localises to the secreted. The protein resides in the cell membrane. Functionally, v region of the variable domain of immunoglobulin heavy chains that participates in the antigen recognition. Immunoglobulins, also known as antibodies, are membrane-bound or secreted glycoproteins produced by B lymphocytes. In the recognition phase of humoral immunity, the membrane-bound immunoglobulins serve as receptors which, upon binding of a specific antigen, trigger the clonal expansion and differentiation of B lymphocytes into immunoglobulins-secreting plasma cells. Secreted immunoglobulins mediate the effector phase of humoral immunity, which results in the elimination of bound antigens. The antigen binding site is formed by the variable domain of one heavy chain, together with that of its associated light chain. Thus, each immunoglobulin has two antigen binding sites with remarkable affinity for a particular antigen. The variable domains are assembled by a process called V-(D)-J rearrangement and can then be subjected to somatic hypermutations which, after exposure to antigen and selection, allow affinity maturation for a particular antigen. The sequence is that of Immunoglobulin heavy variable 2-5 from Homo sapiens (Human).